We begin with the raw amino-acid sequence, 427 residues long: Imidazolonepropionase (427 aa).

The Fe(3+) site is built by His-96 and His-98. Positions 96 and 98 each coordinate Zn(2+). 4-imidazolone-5-propanoate contacts are provided by Arg-105, Tyr-168, and His-201. Tyr-168 contacts N-formimidoyl-L-glutamate. Residue His-265 coordinates Fe(3+). His-265 lines the Zn(2+) pocket. Gln-268 is a 4-imidazolone-5-propanoate binding site. Asp-340 is a binding site for Fe(3+). Asp-340 provides a ligand contact to Zn(2+). N-formimidoyl-L-glutamate-binding residues include Asn-342 and Gly-344. Thr-345 contributes to the 4-imidazolone-5-propanoate binding site.

The protein belongs to the metallo-dependent hydrolases superfamily. HutI family. The cofactor is Zn(2+). Fe(3+) is required as a cofactor.

It is found in the cytoplasm. It catalyses the reaction 4-imidazolone-5-propanoate + H2O = N-formimidoyl-L-glutamate. Its pathway is amino-acid degradation; L-histidine degradation into L-glutamate; N-formimidoyl-L-glutamate from L-histidine: step 3/3. In terms of biological role, catalyzes the hydrolytic cleavage of the carbon-nitrogen bond in imidazolone-5-propanoate to yield N-formimidoyl-L-glutamate. It is the third step in the universal histidine degradation pathway. This Psychrobacter cryohalolentis (strain ATCC BAA-1226 / DSM 17306 / VKM B-2378 / K5) protein is Imidazolonepropionase.